The chain runs to 131 residues: Profilin-9 (131 aa).

Cys13 and Cys115 are oxidised to a cystine. The Involved in PIP2 interaction signature appears at 81–97 (AVIRGKKGSGGITVKKT). Thr111 carries the post-translational modification Phosphothreonine.

It belongs to the profilin family. In terms of assembly, occurs in many kinds of cells as a complex with monomeric actin in a 1:1 ratio. Post-translationally, phosphorylated by MAP kinases.

The protein localises to the cytoplasm. Its subcellular location is the cytoskeleton. Its function is as follows. Binds to actin and affects the structure of the cytoskeleton. At high concentrations, profilin prevents the polymerization of actin, whereas it enhances it at low concentrations. The sequence is that of Profilin-9 from Zea mays (Maize).